The primary structure comprises 584 residues: Poly(A) RNA polymerase protein 2 (584 aa).

Residues 1–11 (MGAKSVTASSS) show a composition bias toward polar residues. Disordered regions lie at residues 1 to 63 (MGAK…LPKD) and 81 to 147 (EGFD…QELE). Positions 12 to 35 (KKIKNRHNGKVKKSKKIKKVRKPQ) are enriched in basic residues. A compositionally biased stretch (basic and acidic residues) spans 53 to 63 (NEQETNKLPKD). A compositionally biased stretch (acidic residues) spans 130-139 (SEDEQAEQEE). Mg(2+) is bound by residues Asp236 and Asp238. Residues Gly301, Lys326, Asn431, and Arg435 each contribute to the ATP site. The PAP-associated domain occupies 371 to 431 (NLGVLLIEFF…AIQDPGDESN (61 aa)). The segment at 525–584 (TSTATATTTDDDYEITNPPAKKAKIEEKPESEPAKRNSGETYITVSSEDDDEDGYNPYTL) is disordered. Positions 547–562 (AKIEEKPESEPAKRNS) are enriched in basic and acidic residues.

It belongs to the DNA polymerase type-B-like family. Component of the TRAMP complex (also called TRF4 complex) composed of at least HUL4, MTR4, PAP2/TRF4 and either AIR1 or AIR2. Interacts with NOP53 and POL2. Interacts directly with AIR2. Mg(2+) serves as cofactor. Requires Mn(2+) as cofactor.

The protein resides in the nucleus. It carries out the reaction RNA(n) + ATP = RNA(n)-3'-adenine ribonucleotide + diphosphate. In terms of biological role, catalytic subunit of the TRAMP complex which has a poly(A) RNA polymerase activity and is involved in a post-transcriptional quality control mechanism limiting inappropriate expression of genetic information. Polyadenylation is required for the degradative activity of the exosome on several of its nuclear RNA substrates like cryptic transcripts generated by RNA polymerase II and III, or hypomethylated pre-tRNAi-Met. Polyadenylates RNA processing and degradation intermediates of snRNAs, snoRNAs and mRNAs that accumulate in strains lacking a functional exosome. TRF4 is also required for proper nuclear division in mitosis, DNA damage repair and sister chromatid cohesion. Involved in the regulation of histone mRNA levels. May mediate mitotic chromosome condensation. The polypeptide is Poly(A) RNA polymerase protein 2 (PAP2) (Saccharomyces cerevisiae (strain ATCC 204508 / S288c) (Baker's yeast)).